Reading from the N-terminus, the 211-residue chain is Histone H1-beta, late embryonic (211 aa).

Disordered stretches follow at residues 1–22 (MAAE…PSSS) and 81–211 (KGAS…AAKK). The H15 domain maps to 17–91 (AHPSSSEMVL…GASGSFKLGK (75 aa)). Basic and acidic residues-rich tracts occupy residues 95-107 (GKSD…DAAK) and 114-123 (KKKEAKEKKA). Composition is skewed to basic residues over residues 124–177 (ARSK…KKAA) and 185–211 (KAAK…AAKK).

Belongs to the histone H1/H5 family.

The protein resides in the nucleus. Its subcellular location is the chromosome. Its function is as follows. Histones H1 are necessary for the condensation of nucleosome chains into higher-order structures. The polypeptide is Histone H1-beta, late embryonic (Strongylocentrotus purpuratus (Purple sea urchin)).